Here is a 118-residue protein sequence, read N- to C-terminus: Evasin P546 (118 aa).

An N-terminal signal peptide occupies residues 1 to 21 (MKVLLYIAASCLMLLALNVSA). 4 cysteine pairs are disulfide-bonded: C38/C59, C55/C96, C72/C101, and C91/C110. N45 carries an N-linked (GlcNAc...) asparagine glycan.

It localises to the secreted. Its function is as follows. Salivary chemokine-binding protein which binds to host chemokines CCL1, CCL3, CCL5 and CCL22. In Amblyomma cajennense (Cayenne tick), this protein is Evasin P546.